The sequence spans 101 residues: Protein Tat (101 aa).

Over residues 1-12 (MEPVDPRLEPWK) the composition is skewed to basic and acidic residues. Residues 1–24 (MEPVDPRLEPWKHPGSQPKTASNN) are disordered. The segment at 1–24 (MEPVDPRLEPWKHPGSQPKTASNN) is interaction with human CREBBP. The tract at residues 1–48 (MEPVDPRLEPWKHPGSQPKTASNNCYCKRCCLHCQVCFTKKGLGISYG) is transactivation. Residues 22–37 (SNNCYCKRCCLHCQVC) are cysteine-rich. Zn(2+) contacts are provided by Cys-25 and Cys-27. Residue Lys-28 is modified to N6-acetyllysine; by host PCAF. Residues Cys-30, His-33, Cys-34, and Cys-37 each contribute to the Zn(2+) site. The interval 38 to 48 (FTKKGLGISYG) is core. Residues 45–101 (ISYGRKKRRQRRRAPQDSKTHQVSLSKQPASQPRGDPTGPKESKKKVERETETDPED) form a disordered region. Residues 48–57 (GRKKRRQRRR) are compositionally biased toward basic residues. The short motif at 49–57 (RKKRRQRRR) is the Nuclear localization signal, RNA-binding (TAR), and protein transduction element. An interaction with the host capping enzyme RNGTT region spans residues 49-86 (RKKRRQRRRAPQDSKTHQVSLSKQPASQPRGDPTGPKE). Lys-50 and Lys-51 each carry N6-acetyllysine; by host EP300 and GCN5L2. Residues Arg-52 and Arg-53 each carry the asymmetric dimethylarginine; by host PRMT6 modification. The segment covering 65-75 (HQVSLSKQPAS) has biased composition (polar residues). Residue Lys-71 forms a Glycyl lysine isopeptide (Lys-Gly) (interchain with G-Cter in ubiquitin) linkage. The Cell attachment site motif lies at 78 to 80 (RGD). Residues 83–101 (GPKESKKKVERETETDPED) are compositionally biased toward basic and acidic residues.

It belongs to the lentiviruses Tat family. In terms of assembly, interacts with host CCNT1. Associates with the P-TEFb complex composed at least of Tat, P-TEFb (CDK9 and CCNT1), TAR RNA, RNA Pol II. Recruits the HATs CREBBP, TAF1/TFIID, EP300, PCAF and GCN5L2. Interacts with host KAT5/Tip60; this interaction targets the latter to degradation. Interacts with the host deacetylase SIRT1. Interacts with host capping enzyme RNGTT; this interaction stimulates RNGTT. Binds to host KDR, and to the host integrins ITGAV/ITGB3 and ITGA5/ITGB1. Interacts with host KPNB1/importin beta-1 without previous binding to KPNA1/importin alpha-1. Interacts with EIF2AK2. Interacts with host nucleosome assembly protein NAP1L1; this interaction may be required for the transport of Tat within the nucleus, since the two proteins interact at the nuclear rim. Interacts with host C1QBP/SF2P32; this interaction involves lysine-acetylated Tat. Interacts with the host chemokine receptors CCR2, CCR3 and CXCR4. Interacts with host DPP4/CD26; this interaction may trigger an anti-proliferative effect. Interacts with host LDLR. Interacts with the host extracellular matrix metalloproteinase MMP1. Interacts with host PRMT6; this interaction mediates Tat's methylation. Interacts with, and is ubiquitinated by MDM2/Hdm2. Interacts with host PSMC3 and HTATIP2. Interacts with STAB1; this interaction may overcome SATB1-mediated repression of IL2 and IL2RA (interleukin) in T cells by binding to the same domain than HDAC1. Interacts (when acetylated) with human CDK13, thereby increasing HIV-1 mRNA splicing and promoting the production of the doubly spliced HIV-1 protein Nef. Interacts with host TBP; this interaction modulates the activity of transcriptional pre-initiation complex. Interacts with host RELA. Interacts with host PLSCR1; this interaction negatively regulates Tat transactivation activity by altering its subcellular distribution. In terms of processing, asymmetrical arginine methylation by host PRMT6 seems to diminish the transactivation capacity of Tat and affects the interaction with host CCNT1. Acetylation by EP300, CREBBP, GCN5L2/GCN5 and PCAF regulates the transactivation activity of Tat. EP300-mediated acetylation of Lys-50 promotes dissociation of Tat from the TAR RNA through the competitive binding to PCAF's bromodomain. In addition, the non-acetylated Tat's N-terminus can also interact with PCAF. PCAF-mediated acetylation of Lys-28 enhances Tat's binding to CCNT1. Lys-50 is deacetylated by SIRT1. Post-translationally, polyubiquitination by host MDM2 does not target Tat to degradation, but activates its transactivation function and fosters interaction with CCNT1 and TAR RNA. In terms of processing, phosphorylated by EIF2AK2 on serine and threonine residues adjacent to the basic region important for TAR RNA binding and function. Phosphorylation of Tat by EIF2AK2 is dependent on the prior activation of EIF2AK2 by dsRNA.

Its subcellular location is the host nucleus. It localises to the host nucleolus. The protein localises to the host cytoplasm. It is found in the secreted. In terms of biological role, transcriptional activator that increases RNA Pol II processivity, thereby increasing the level of full-length viral transcripts. Recognizes a hairpin structure at the 5'-LTR of the nascent viral mRNAs referred to as the transactivation responsive RNA element (TAR) and recruits the cyclin T1-CDK9 complex (P-TEFb complex) that will in turn hyperphosphorylate the RNA polymerase II to allow efficient elongation. The CDK9 component of P-TEFb and other Tat-activated kinases hyperphosphorylate the C-terminus of RNA Pol II that becomes stabilized and much more processive. Other factors such as HTATSF1/Tat-SF1, SUPT5H/SPT5, and HTATIP2 are also important for Tat's function. Besides its effect on RNA Pol II processivity, Tat induces chromatin remodeling of proviral genes by recruiting the histone acetyltransferases (HATs) CREBBP, EP300 and PCAF to the chromatin. This also contributes to the increase in proviral transcription rate, especially when the provirus integrates in transcriptionally silent region of the host genome. To ensure maximal activation of the LTR, Tat mediates nuclear translocation of NF-kappa-B by interacting with host RELA. Through its interaction with host TBP, Tat may also modulate transcription initiation. Tat can reactivate a latently infected cell by penetrating in it and transactivating its LTR promoter. In the cytoplasm, Tat is thought to act as a translational activator of HIV-1 mRNAs. Extracellular circulating Tat can be endocytosed by surrounding uninfected cells via the binding to several surface receptors such as CD26, CXCR4, heparan sulfate proteoglycans (HSPG) or LDLR. Neurons are rarely infected, but they internalize Tat via their LDLR. Through its interaction with nuclear HATs, Tat is potentially able to control the acetylation-dependent cellular gene expression. Modulates the expression of many cellular genes involved in cell survival, proliferation or in coding for cytokines or cytokine receptors. Tat plays a role in T-cell and neurons apoptosis. Tat induced neurotoxicity and apoptosis probably contribute to neuroAIDS. Circulating Tat also acts as a chemokine-like and/or growth factor-like molecule that binds to specific receptors on the surface of the cells, affecting many cellular pathways. In the vascular system, Tat binds to ITGAV/ITGB3 and ITGA5/ITGB1 integrins dimers at the surface of endothelial cells and competes with bFGF for heparin-binding sites, leading to an excess of soluble bFGF. The protein is Protein Tat of Homo sapiens (Human).